The sequence spans 876 residues: Exonuclease mut-7 homolog (876 aa).

Positions 517-571 (GLSLLVQQVLGTALDKTQQLSNWDRRPLCEEQVIYAAADAYCLLEVHQALCREPA) constitute a 3'-5' exonuclease domain. Disordered regions lie at residues 578 to 607 (DLAGSRRPRHRERPGARKPPGLQKASAPAA) and 751 to 781 (SHQEGPRSSGDEATQSQAVQEPGPAPDAAPE).

Belongs to the mut-7 family. The cofactor is Mg(2+).

Functionally, possesses 3'-5' exoribonuclease activity. Required for 3'-end trimming of AGO1-bound miRNAs. The sequence is that of Exonuclease mut-7 homolog (EXD3) from Homo sapiens (Human).